Reading from the N-terminus, the 122-residue chain is Large ribosomal subunit protein uL14 (122 aa).

The protein belongs to the universal ribosomal protein uL14 family. As to quaternary structure, part of the 50S ribosomal subunit. Forms a cluster with proteins L3 and L19. In the 70S ribosome, L14 and L19 interact and together make contacts with the 16S rRNA in bridges B5 and B8.

Functionally, binds to 23S rRNA. Forms part of two intersubunit bridges in the 70S ribosome. The chain is Large ribosomal subunit protein uL14 from Cupriavidus metallidurans (strain ATCC 43123 / DSM 2839 / NBRC 102507 / CH34) (Ralstonia metallidurans).